We begin with the raw amino-acid sequence, 282 residues long: Pantothenate synthetase (282 aa).

26–33 (MGNLHEGH) serves as a coordination point for ATP. His-33 serves as the catalytic Proton donor. Gln-57 is a (R)-pantoate binding site. A beta-alanine-binding site is contributed by Gln-57. Residue 148–151 (GKKD) participates in ATP binding. Gln-154 is a (R)-pantoate binding site. 185 to 188 (LSSR) is a binding site for ATP.

This sequence belongs to the pantothenate synthetase family. In terms of assembly, homodimer.

The protein resides in the cytoplasm. It catalyses the reaction (R)-pantoate + beta-alanine + ATP = (R)-pantothenate + AMP + diphosphate + H(+). The protein operates within cofactor biosynthesis; (R)-pantothenate biosynthesis; (R)-pantothenate from (R)-pantoate and beta-alanine: step 1/1. Functionally, catalyzes the condensation of pantoate with beta-alanine in an ATP-dependent reaction via a pantoyl-adenylate intermediate. This is Pantothenate synthetase from Paracidovorax citrulli (strain AAC00-1) (Acidovorax citrulli).